A 322-amino-acid polypeptide reads, in one-letter code: METQATLNSIQKAVWDGRLPLQIRLAPSESRIYDQTDPYLISYPRISYLPSLLPRLRAFFASSLIDPSSNAHDGWFSFEGVPLKWHLPIGLLYDLYAGADPASKGTAESEDAGWDIDDQDNPLPWRLVVHFSDWPDEELVRLDAEGMVMNDAFINSVKEADFLRNGTAKGIMSLSKEDSSGLWKSVQNVELSSFQRISNILLPPLNQPFRNIPIRIFLPLPPDSGSPSLKIVQSPVPPLIPPSSVAASQLALSRSSITPQTQTIGSALHSLLPNLFPSRRTPVLAKPVLHGAAVPMSAPVEELVRSSAYGDGWLYVVIRMMG.

Lysine 158 participates in a covalent cross-link: Glycyl lysine isopeptide (Lys-Gly) (interchain with G-Cter in atg12).

The protein belongs to the ATG5 family. Conjugated with atg12. Post-translationally, conjugated to atg12; which is essential for autophagy.

It localises to the preautophagosomal structure membrane. Involved in cytoplasm to vacuole transport (Cvt) and autophagic vesicle formation. Autophagy is essential for maintenance of amino acid levels and protein synthesis under nitrogen starvation. Required for selective autophagic degradation of the nucleus (nucleophagy). Also required for mitophagy, which eliminates defective or superfluous mitochondria in order to fulfill cellular energy requirements and prevent excess ROS production. Conjugation with atg12, through a ubiquitin-like conjugating system involving atg7 as an E1-like activating enzyme and atg10 as an E2-like conjugating enzyme, is essential for its function. The atg12-atg5 conjugate acts as an E3-like enzyme which is required for lipidation of atg8 and atg8 association to the vesicle membranes. The sequence is that of Autophagy protein 5 (atg5) from Aspergillus oryzae (strain ATCC 42149 / RIB 40) (Yellow koji mold).